We begin with the raw amino-acid sequence, 148 residues long: uncharacterized protein (148 aa).

Positions 1–16 (MDVLFIALLVAPLILG) are cleaved as a signal peptide. An N-linked (GlcNAc...) asparagine glycan is attached at asparagine 50. Positions 91 to 125 (MDPQNPVTTKPVTTEPVTTEPVTTEPQSPNQNDAM) are disordered. Positions 96-116 (PVTTKPVTTEPVTTEPVTTEP) are enriched in low complexity.

The protein resides in the secreted. This is an uncharacterized protein from Mus musculus (Mouse).